A 112-amino-acid polypeptide reads, in one-letter code: Cytochrome c6 (112 aa).

An N-terminal signal peptide occupies residues 1-25 (MKTLLTILALTLVTLTTWLSTPAFA). Heme c contacts are provided by C39, C42, H43, and M83.

It belongs to the cytochrome c family. PetJ subfamily. Monomer. In terms of processing, binds 1 heme c group covalently per subunit.

The protein resides in the cellular thylakoid lumen. In terms of biological role, functions as an electron carrier between membrane-bound cytochrome b6-f and photosystem I in oxygenic photosynthesis. The sequence is that of Cytochrome c6 from Synechococcus sp. (strain ATCC 27167 / PCC 6312).